Reading from the N-terminus, the 129-residue chain is DNA-directed RNA polymerase subunit omega (129 aa).

The disordered stretch occupies residues 77–98 (VDEPESEVVPALSSAPQNPEAI).

This sequence belongs to the RNA polymerase subunit omega family. The RNAP catalytic core consists of 2 alpha, 1 beta, 1 beta' and 1 omega subunit. When a sigma factor is associated with the core the holoenzyme is formed, which can initiate transcription.

It catalyses the reaction RNA(n) + a ribonucleoside 5'-triphosphate = RNA(n+1) + diphosphate. Its function is as follows. Promotes RNA polymerase assembly. Latches the N- and C-terminal regions of the beta' subunit thereby facilitating its interaction with the beta and alpha subunits. The polypeptide is DNA-directed RNA polymerase subunit omega (Methylocella silvestris (strain DSM 15510 / CIP 108128 / LMG 27833 / NCIMB 13906 / BL2)).